The chain runs to 112 residues: Large ribosomal subunit protein uL22 (112 aa).

The protein belongs to the universal ribosomal protein uL22 family. As to quaternary structure, part of the 50S ribosomal subunit.

In terms of biological role, this protein binds specifically to 23S rRNA; its binding is stimulated by other ribosomal proteins, e.g. L4, L17, and L20. It is important during the early stages of 50S assembly. It makes multiple contacts with different domains of the 23S rRNA in the assembled 50S subunit and ribosome. Functionally, the globular domain of the protein is located near the polypeptide exit tunnel on the outside of the subunit, while an extended beta-hairpin is found that lines the wall of the exit tunnel in the center of the 70S ribosome. The protein is Large ribosomal subunit protein uL22 of Desulfovibrio desulfuricans (strain ATCC 27774 / DSM 6949 / MB).